We begin with the raw amino-acid sequence, 133 residues long: Small ribosomal subunit protein uS19 (133 aa).

It belongs to the universal ribosomal protein uS19 family. As to quaternary structure, part of the 30S ribosomal subunit.

In terms of biological role, protein S19 forms a complex with S13 that binds strongly to the 16S ribosomal RNA. This chain is Small ribosomal subunit protein uS19, found in Thermococcus kodakarensis (strain ATCC BAA-918 / JCM 12380 / KOD1) (Pyrococcus kodakaraensis (strain KOD1)).